The following is a 432-amino-acid chain: Trigger factor (432 aa).

Residues E161–P246 enclose the PPIase FKBP-type domain.

The protein belongs to the FKBP-type PPIase family. Tig subfamily.

It localises to the cytoplasm. It carries out the reaction [protein]-peptidylproline (omega=180) = [protein]-peptidylproline (omega=0). Functionally, involved in protein export. Acts as a chaperone by maintaining the newly synthesized protein in an open conformation. Functions as a peptidyl-prolyl cis-trans isomerase. The chain is Trigger factor from Klebsiella pneumoniae subsp. pneumoniae (strain ATCC 700721 / MGH 78578).